Consider the following 311-residue polypeptide: Formimidoylglutamase (311 aa).

The Mn(2+) site is built by His122, Asp151, His153, Asp155, Cys242, and Asp244.

This sequence belongs to the arginase family. Mn(2+) serves as cofactor.

It catalyses the reaction N-formimidoyl-L-glutamate + H2O = formamide + L-glutamate. It participates in amino-acid degradation; L-histidine degradation into L-glutamate; L-glutamate from N-formimidoyl-L-glutamate (hydrolase route): step 1/1. Functionally, catalyzes the conversion of N-formimidoyl-L-glutamate to L-glutamate and formamide. This chain is Formimidoylglutamase, found in Pseudomonas paraeruginosa (strain DSM 24068 / PA7) (Pseudomonas aeruginosa (strain PA7)).